The chain runs to 522 residues: Glutamate--cysteine ligase (522 aa).

The protein belongs to the glutamate--cysteine ligase type 1 family. Type 1 subfamily.

It catalyses the reaction L-cysteine + L-glutamate + ATP = gamma-L-glutamyl-L-cysteine + ADP + phosphate + H(+). It functions in the pathway sulfur metabolism; glutathione biosynthesis; glutathione from L-cysteine and L-glutamate: step 1/2. In Vibrio campbellii (strain ATCC BAA-1116), this protein is Glutamate--cysteine ligase.